We begin with the raw amino-acid sequence, 578 residues long: A-type ATP synthase subunit A (578 aa).

Position 228–235 (228–235) interacts with ATP; that stretch reads GPFGSGKT.

This sequence belongs to the ATPase alpha/beta chains family. In terms of assembly, has multiple subunits with at least A(3), B(3), C, D, E, F, H, I and proteolipid K(x).

Its subcellular location is the cell membrane. The enzyme catalyses ATP + H2O + 4 H(+)(in) = ADP + phosphate + 5 H(+)(out). Functionally, component of the A-type ATP synthase that produces ATP from ADP in the presence of a proton gradient across the membrane. The A chain is the catalytic subunit. The sequence is that of A-type ATP synthase subunit A from Methanococcoides burtonii (strain DSM 6242 / NBRC 107633 / OCM 468 / ACE-M).